We begin with the raw amino-acid sequence, 137 residues long: Golgin subfamily A member 7 (137 aa).

S-palmitoyl cysteine attachment occurs at residues Cys69 and Cys72.

This sequence belongs to the ERF4 family. In terms of assembly, interacts with GOLGA3. Interacts with ZDHHC9. Post-translationally, palmitoylated on Cys-69 and Cys-72; which is required for Golgi localization and interaction with GOLGA3.

The protein localises to the golgi apparatus membrane. May be involved in protein transport from Golgi to cell surface. The ZDHHC9-GOLGA7 complex is a palmitoyltransferase specific for HRAS and NRAS. This Rattus norvegicus (Rat) protein is Golgin subfamily A member 7 (Golga7).